The chain runs to 156 residues: Small ribosomal subunit protein uS7 (156 aa).

Belongs to the universal ribosomal protein uS7 family. As to quaternary structure, part of the 30S ribosomal subunit. Contacts proteins S9 and S11.

In terms of biological role, one of the primary rRNA binding proteins, it binds directly to 16S rRNA where it nucleates assembly of the head domain of the 30S subunit. Is located at the subunit interface close to the decoding center, probably blocks exit of the E-site tRNA. In Clostridium botulinum (strain Okra / Type B1), this protein is Small ribosomal subunit protein uS7.